The chain runs to 334 residues: Methionine adenosyltransferase 2 subunit beta (334 aa).

NADP(+) is bound by residues 37 to 40, 60 to 62, 71 to 72, cysteine 93, arginine 97, tyrosine 159, and leucine 185; these read TGLL, FRR, and NL. Phosphothreonine is present on threonine 309. The required for interaction with MAT2A stretch occupies residues 319 to 334; it reads LWPFLIDKRWRQTVFH.

It belongs to the dTDP-4-dehydrorhamnose reductase family. MAT2B subfamily. Heterotrimer; composed of a catalytic MAT2A homodimer that binds one regulatory MAT2B chain. Heterohexamer; composed of a central, catalytic MAT2A homotetramer flanked on either side by a regulatory MAT2B chain. NADP binding increases the affinity for MAT2A.

It participates in amino-acid biosynthesis; S-adenosyl-L-methionine biosynthesis; S-adenosyl-L-methionine from L-methionine: step 1/1. Functionally, regulatory subunit of S-adenosylmethionine synthetase 2, an enzyme that catalyzes the formation of S-adenosylmethionine from methionine and ATP. Regulates MAT2A catalytic activity by changing its kinetic properties, increasing its affinity for L-methionine. Can bind NADP (in vitro). This Rattus norvegicus (Rat) protein is Methionine adenosyltransferase 2 subunit beta (Mat2b).